A 102-amino-acid chain; its full sequence is Small ribosomal subunit protein uS10 (102 aa).

It belongs to the universal ribosomal protein uS10 family. As to quaternary structure, part of the 30S ribosomal subunit.

Involved in the binding of tRNA to the ribosomes. The protein is Small ribosomal subunit protein uS10 of Desulfitobacterium hafniense (strain DSM 10664 / DCB-2).